A 652-amino-acid chain; its full sequence is Apicoplast pyruvate carrier 2 (652 aa).

The Cytoplasmic portion of the chain corresponds to 1 to 45 (MSAFPASPQPSAFPASPQPSAFPASPQPSASPVSPRHCVSPSSGT). Residues 1–53 (MSAFPASPQPSAFPASPQPSAFPASPQPSASPVSPRHCVSPSSGTLPSSSSPS) form a disordered region. 12 helical membrane passes run 46 to 66 (LPSS…SSSS), 126 to 146 (NLLP…AVSY), 167 to 187 (GTTL…SAWM), 189 to 209 (LGLA…IAYG), 212 to 232 (TALG…KLSP), 278 to 298 (LPYL…SSLN), 345 to 365 (LVDP…AERQ), 385 to 405 (SCSA…ICSS), 417 to 437 (LSWQ…LYPE), 445 to 465 (AAPA…PRAL), 467 to 487 (SASR…SLTG), and 515 to 535 (LWGY…MNAL). The Cytoplasmic portion of the chain corresponds to 536–652 (TAPCLFALST…LPYRFPTYSP (117 aa)).

It belongs to the major facilitator superfamily. Interacts with apicoplast pyruvate carrier 1.

The protein localises to the plastid. Its subcellular location is the apicoplast. It localises to the membrane. Its function is as follows. Along with apicoplast pyruvate carrier 1, forms apicoplast pyruvate carrier (APC) complex, which transports pyruvate into the apicoplast and may also transport amino acids like methionine, serine, glycine and tryptophan with low efficiency. Required for maintaining pyruvate-dependent metabolic activities in the apicoplast, such as synthesis of fatty acids, isopentenyl pyrophosphate (IPP), dimethylallyl pyrophosphate (DMAPP) and methylerythritol 4-phosphate (MEP). Required for maintaining the integrity of the apicoplast. Required for normal parasite growth. This is Apicoplast pyruvate carrier 2 from Toxoplasma gondii.